Reading from the N-terminus, the 334-residue chain is Tetratricopeptide repeat protein 24 (334 aa).

TPR repeat units lie at residues 35–68, 72–105, 112–145, and 152–185; these read GPFY…CRQP, ATVL…HGSV, GRSF…AQDT, and WQAC…CQHE. Positions 220–258 are disordered; the sequence is PGKLQTSRKAKTSARVQSSAEDAQESQWEGEASEGGHEK. The span at 233–246 shows a compositional bias: polar residues; that stretch reads ARVQSSAEDAQESQ.

This is Tetratricopeptide repeat protein 24 (Ttc24) from Mus musculus (Mouse).